The chain runs to 250 residues: N-acyl homoserine lactonase (250 aa).

Positions 104, 106, 108, 109, 169, 191, and 235 each coordinate Zn(2+).

It belongs to the metallo-beta-lactamase superfamily. As to quaternary structure, monomer. Zn(2+) is required as a cofactor.

The enzyme catalyses an N-acyl-L-homoserine lactone + H2O = an N-acyl-L-homoserine + H(+). Completely inhibited by Cu(2+) and Ag(+). Partially inhibited by Cr(2+), Pb(2+) and Fe(2+). Mg(2+), Ca(2+), Mn(2+), Co(2+), Ni(2+), Zn(2+) and Cd(2+) have no effect on activity. The chelating agents EDTA, 2,2'bipyridine and o-phenanthroline have no effect on enzyme activity. Its function is as follows. Hydrolyzes acyl homoserine lactones with varying lengths of acyl chains, with a slight preference for substrates without 3-oxo substitution at the C3 position. Has only residual activity towards non-acyl lactones, and no activity towards non-cyclic esters. This chain is N-acyl homoserine lactonase, found in Bacillus sp.